Consider the following 585-residue polypeptide: Arginine--tRNA ligase (585 aa).

The short motif at 131 to 141 (ANPTGPMHVGH) is the 'HIGH' region element.

The protein belongs to the class-I aminoacyl-tRNA synthetase family. As to quaternary structure, monomer.

It localises to the cytoplasm. The enzyme catalyses tRNA(Arg) + L-arginine + ATP = L-arginyl-tRNA(Arg) + AMP + diphosphate. This chain is Arginine--tRNA ligase, found in Rhizobium etli (strain ATCC 51251 / DSM 11541 / JCM 21823 / NBRC 15573 / CFN 42).